We begin with the raw amino-acid sequence, 548 residues long: Chaperonin GroEL (548 aa).

Residues 29–32 (TLGP), 86–90 (DGTTT), G413, 476–478 (NAL), and D492 contribute to the ATP site. The segment covering 522 to 531 (PDEDDNDDGD) has biased composition (acidic residues). Positions 522 to 548 (PDEDDNDDGDMGGGAPGMGGMGGMPGM) are disordered. Residues 532–548 (MGGGAPGMGGMGGMPGM) are compositionally biased toward gly residues.

The protein belongs to the chaperonin (HSP60) family. In terms of assembly, forms a cylinder of 14 subunits composed of two heptameric rings stacked back-to-back. Interacts with the co-chaperonin GroES.

The protein localises to the cytoplasm. It catalyses the reaction ATP + H2O + a folded polypeptide = ADP + phosphate + an unfolded polypeptide.. Its function is as follows. Together with its co-chaperonin GroES, plays an essential role in assisting protein folding. The GroEL-GroES system forms a nano-cage that allows encapsulation of the non-native substrate proteins and provides a physical environment optimized to promote and accelerate protein folding. The sequence is that of Chaperonin GroEL from Natranaerobius thermophilus (strain ATCC BAA-1301 / DSM 18059 / JW/NM-WN-LF).